The primary structure comprises 275 residues: Light-independent protochlorophyllide reductase iron-sulfur ATP-binding protein (275 aa).

Residues 12 to 17 and Lys-41 contribute to the ATP site; that span reads GIGKST. Ser-16 contributes to the Mg(2+) binding site. Residues Cys-97 and Cys-131 each contribute to the [4Fe-4S] cluster site. 182–183 contributes to the ATP binding site; it reads NR.

This sequence belongs to the NifH/BchL/ChlL family. Homodimer. Protochlorophyllide reductase is composed of three subunits; BchL, BchN and BchB. The cofactor is [4Fe-4S] cluster.

The enzyme catalyses chlorophyllide a + oxidized 2[4Fe-4S]-[ferredoxin] + 2 ADP + 2 phosphate = protochlorophyllide a + reduced 2[4Fe-4S]-[ferredoxin] + 2 ATP + 2 H2O. It functions in the pathway porphyrin-containing compound metabolism; bacteriochlorophyll biosynthesis (light-independent). In terms of biological role, component of the dark-operative protochlorophyllide reductase (DPOR) that uses Mg-ATP and reduced ferredoxin to reduce ring D of protochlorophyllide (Pchlide) to form chlorophyllide a (Chlide). This reaction is light-independent. The L component serves as a unique electron donor to the NB-component of the complex, and binds Mg-ATP. The protein is Light-independent protochlorophyllide reductase iron-sulfur ATP-binding protein of Pelodictyon phaeoclathratiforme (strain DSM 5477 / BU-1).